Here is a 377-residue protein sequence, read N- to C-terminus: Flap endonuclease 1 (377 aa).

Residues 1-105 (MGIKGLNAII…HELSKRTARR (105 aa)) are N-domain. Asp34 serves as a coordination point for Mg(2+). DNA contacts are provided by Arg47 and Arg71. Residue Asp87 participates in Mg(2+) binding. The interval 99 to 119 (SKRTARREETEKKLQEATDQA) is disordered. The tract at residues 120-251 (EKMKQERRLV…VTALKLIKEY (132 aa)) is I-domain. The Mg(2+) site is built by Glu156, Glu158, Asp177, and Asp179. Glu156 is a binding site for DNA. Residues Gly229 and Asp231 each contribute to the DNA site. Asp231 contributes to the Mg(2+) binding site. An interaction with PCNA region spans residues 338-346 (VQGRLDGFF).

The protein belongs to the XPG/RAD2 endonuclease family. FEN1 subfamily. Interacts with PCNA. Three molecules of FEN1 bind to one PCNA trimer with each molecule binding to one PCNA monomer. PCNA stimulates the nuclease activity without altering cleavage specificity. Requires Mg(2+) as cofactor. Post-translationally, phosphorylated. Phosphorylation upon DNA damage induces relocalization to the nuclear plasma.

Its subcellular location is the nucleus. The protein resides in the nucleolus. The protein localises to the nucleoplasm. It is found in the mitochondrion. Its function is as follows. Structure-specific nuclease with 5'-flap endonuclease and 5'-3' exonuclease activities involved in DNA replication and repair. During DNA replication, cleaves the 5'-overhanging flap structure that is generated by displacement synthesis when DNA polymerase encounters the 5'-end of a downstream Okazaki fragment. It enters the flap from the 5'-end and then tracks to cleave the flap base, leaving a nick for ligation. Also involved in the long patch base excision repair (LP-BER) pathway, by cleaving within the apurinic/apyrimidinic (AP) site-terminated flap. Acts as a genome stabilization factor that prevents flaps from equilibrating into structures that lead to duplications and deletions. Also possesses 5'-3' exonuclease activity on nicked or gapped double-stranded DNA, and exhibits RNase H activity. Also involved in replication and repair of rDNA and in repairing mitochondrial DNA. The protein is Flap endonuclease 1 of Vanderwaltozyma polyspora (strain ATCC 22028 / DSM 70294 / BCRC 21397 / CBS 2163 / NBRC 10782 / NRRL Y-8283 / UCD 57-17) (Kluyveromyces polysporus).